The primary structure comprises 484 residues: Cobyric acid synthase (484 aa).

A GATase cobBQ-type domain is found at 251 to 438 (ALKIAVPMLP…LHGLFGSDAY (188 aa)). The active-site Nucleophile is the Cys-333. The active site involves His-430.

The protein belongs to the CobB/CobQ family. CobQ subfamily.

Its pathway is cofactor biosynthesis; adenosylcobalamin biosynthesis. In terms of biological role, catalyzes amidations at positions B, D, E, and G on adenosylcobyrinic A,C-diamide. NH(2) groups are provided by glutamine, and one molecule of ATP is hydrogenolyzed for each amidation. This Rhizobium etli (strain ATCC 51251 / DSM 11541 / JCM 21823 / NBRC 15573 / CFN 42) protein is Cobyric acid synthase.